We begin with the raw amino-acid sequence, 183 residues long: Protein Syd (183 aa).

It belongs to the Syd family.

Its subcellular location is the cell inner membrane. In terms of biological role, interacts with the SecY protein in vivo. May bind preferentially to an uncomplexed state of SecY, thus functioning either as a chelating agent for excess SecY in the cell or as a regulatory factor that negatively controls the translocase function. The protein is Protein Syd of Yersinia pseudotuberculosis serotype O:1b (strain IP 31758).